The following is a 283-amino-acid chain: Bifunctional protein FolD (283 aa).

NADP(+) is bound by residues 164 to 166, Ser-189, and Thr-230; that span reads GRS.

It belongs to the tetrahydrofolate dehydrogenase/cyclohydrolase family. As to quaternary structure, homodimer.

It carries out the reaction (6R)-5,10-methylene-5,6,7,8-tetrahydrofolate + NADP(+) = (6R)-5,10-methenyltetrahydrofolate + NADPH. The catalysed reaction is (6R)-5,10-methenyltetrahydrofolate + H2O = (6R)-10-formyltetrahydrofolate + H(+). It participates in one-carbon metabolism; tetrahydrofolate interconversion. Catalyzes the oxidation of 5,10-methylenetetrahydrofolate to 5,10-methenyltetrahydrofolate and then the hydrolysis of 5,10-methenyltetrahydrofolate to 10-formyltetrahydrofolate. The chain is Bifunctional protein FolD from Dictyoglomus thermophilum (strain ATCC 35947 / DSM 3960 / H-6-12).